A 117-amino-acid chain; its full sequence is Non-specific lipid-transfer protein B (117 aa).

Residues 1–25 (MAGLVKLSCLVLACMIVAGPIATNA) form the signal peptide. Cystine bridges form between C29–C76, C39–C53, C54–C99, and C74–C113.

This sequence belongs to the plant LTP family.

Plant non-specific lipid-transfer proteins transfer phospholipids as well as galactolipids across membranes. May play a role in wax or cutin deposition in the cell walls of expanding epidermal cells and certain secretory tissues. This chain is Non-specific lipid-transfer protein B (WAX9B), found in Brassica oleracea var. italica (Broccoli).